Consider the following 125-residue polypeptide: Antitoxin MazE5 (125 aa).

In terms of assembly, forms a complex with cognate toxin MazF5.

Functionally, antitoxin component of a type II toxin-antitoxin (TA) system. Upon expression in M.smegmatis neutralizes the effect of cognate toxin MazF5. The sequence is that of Antitoxin MazE5 (mazE5) from Mycobacterium tuberculosis (strain ATCC 25618 / H37Rv).